A 653-amino-acid polypeptide reads, in one-letter code: Sodium-dependent nutrient amino acid transporter 1 (653 aa).

A disordered region spans residues 1 to 55; sequence MELKGVHQQNGTSNGTGAAGTEGESPPPAPAPATAEAAASLETTTEKVDAEQQKT. The Cytoplasmic portion of the chain corresponds to 1 to 59; that stretch reads MELKGVHQQNGTSNGTGAAGTEGESPPPAPAPATAEAAASLETTTEKVDAEQQKTERTN. Low complexity-rich tracts occupy residues 10-24 and 32-43; these read NGTS…TEGE and PATAEAAASLET. Over residues 44–55 the composition is skewed to basic and acidic residues; sequence TTEKVDAEQQKT. 4 helical membrane passes run 60-80, 93-113, 125-145, and 146-166; these read WGNG…LGNV, GAFL…MYYL, TVKI…QAFA, and TICI…YLFV. N-linked (GlcNAc...) asparagine glycosylation is found at Asn202 and Asn205. Transmembrane regions (helical) follow at residues 241 to 261, 270 to 290, 319 to 339, 353 to 373, 413 to 433, 459 to 479, 486 to 506, 528 to 548, and 565 to 585; these read PDWK…LVIM, AAYF…VRAV, AVVQ…MFAS, IVTT…FAIL, LFSV…IVAL, ICGF…ILTL, TYVV…IYGM, CWSF…MVTI, and AGWL…MWYI.

This sequence belongs to the sodium:neurotransmitter symporter (SNF) (TC 2.A.22) family.

The protein resides in the membrane. Its function is as follows. Unusual broad substrate spectrum amino acid:sodium cotransporter that promotes absorption of the D isomers of essential amino acids. Neutral amino acids are the preferred substrates, especially methionine and phenylalanine. The protein is Sodium-dependent nutrient amino acid transporter 1 of Drosophila pseudoobscura pseudoobscura (Fruit fly).